The chain runs to 91 residues: Acyl carrier protein AsbD (91 aa).

The 79-residue stretch at 4–82 (EALKNAVLKI…SLLDFMEELQ (79 aa)) folds into the Carrier domain. Ser40 is subject to O-(pantetheine 4'-phosphoryl)serine.

This sequence belongs to the acyl carrier protein (ACP) family. Activated by the transfer of a 4'-phosphopantetheine group from CoA to Ser-40.

It functions in the pathway siderophore biosynthesis; petrobactin biosynthesis. Functionally, involved in the biosynthesis of petrobactin, a catecholate siderophore that functions in both iron acquisition and virulence. Aryl-carrier protein that activates 3,4-dihydroxybenzoate (3,4-DHBA) prior to its incorporation into petrobactin. This chain is Acyl carrier protein AsbD, found in Bacillus anthracis.